The primary structure comprises 121 residues: Large ribosomal subunit protein uL18 (121 aa).

The protein belongs to the universal ribosomal protein uL18 family. As to quaternary structure, part of the 50S ribosomal subunit; part of the 5S rRNA/L5/L18/L25 subcomplex. Contacts the 5S and 23S rRNAs.

Its function is as follows. This is one of the proteins that bind and probably mediate the attachment of the 5S RNA into the large ribosomal subunit, where it forms part of the central protuberance. The sequence is that of Large ribosomal subunit protein uL18 from Anaplasma phagocytophilum (strain HZ).